Reading from the N-terminus, the 188-residue chain is dCTP deaminase (188 aa).

DCTP-binding positions include 111–116 (KSTYAR), 135–137 (TLE), Q156, Y170, and Q180. E137 acts as the Proton donor/acceptor in catalysis.

This sequence belongs to the dCTP deaminase family. In terms of assembly, homotrimer.

The catalysed reaction is dCTP + H2O + H(+) = dUTP + NH4(+). The protein operates within pyrimidine metabolism; dUMP biosynthesis; dUMP from dCTP (dUTP route): step 1/2. Its function is as follows. Catalyzes the deamination of dCTP to dUTP. This Nitrosococcus oceani (strain ATCC 19707 / BCRC 17464 / JCM 30415 / NCIMB 11848 / C-107) protein is dCTP deaminase.